A 371-amino-acid chain; its full sequence is Nicotinate-nucleotide pyrophosphorylase [carboxylating], chloroplastic (371 aa).

The transit peptide at 1–48 (MPAAAAAAAPPNPNVLQLAPRLRGLVSFPSSYSSSSPFSNRLRLRLPR) directs the protein to the chloroplast. Residues Arg162, 193–195 (TRK), Arg217, Lys227, Glu260, Asp287, 319–321 (SGN), and 340–342 (SGA) each bind substrate.

It belongs to the NadC/ModD family.

It localises to the plastid. Its subcellular location is the chloroplast. It carries out the reaction nicotinate beta-D-ribonucleotide + CO2 + diphosphate = quinolinate + 5-phospho-alpha-D-ribose 1-diphosphate + 2 H(+). It functions in the pathway cofactor biosynthesis; NAD(+) biosynthesis; nicotinate D-ribonucleotide from quinolinate: step 1/1. In terms of biological role, involved in the catabolism of quinolinic acid (QA). The polypeptide is Nicotinate-nucleotide pyrophosphorylase [carboxylating], chloroplastic (Oryza sativa subsp. japonica (Rice)).